The chain runs to 393 residues: MLSNAQRALIKATVPLLETGGEALITHFYRTMLGEYPEVRPLFNQAHQASGDQPRALANGVLMYARHIDQLQELGPLVAKVVNKHVSLQVLPEHYPIVGTCLLRAIREVLGEQIATDEVLEAWGAAYQQLADLLIEAEESVYAASAQADGGWRGVRRFRVARKQAESEEITSFYLEPVDGQPLLAFQPGQYIGLRLDIDGEEVRRNYSLSAASNGREYRISVKREAGGRVSNYLHDRVAEGDELDLFPPAGDFVLRDSDKPLVLITAGVGITPALAMLQEALPQARPIRFIHCARHGGVHAFRDWIEDVSAQHEQVEHFFCYSEPRAGDSADAEGLLSREKLADWLPQERDLDAYFLGPRPFMAQVKRHLADLGVPSQQCHYEFFGPAAALDA.

Positions 1–139 constitute a Globin domain; the sequence is MLSNAQRALI…LADLLIEAEE (139 aa). Histidine 85 lines the heme b pocket. Catalysis depends on charge relay system residues tyrosine 95 and glutamate 138. The reductase stretch occupies residues 150–393; sequence GGWRGVRRFR…FFGPAAALDA (244 aa). Residues 153-256 form the FAD-binding FR-type domain; that stretch reads RGVRRFRVAR…FPPAGDFVLR (104 aa). Residues tyrosine 191 and 205–208 each bind FAD; that span reads RNYS. 268-273 provides a ligand contact to NADP(+); the sequence is GVGITP. 384–387 lines the FAD pocket; that stretch reads FFGP.

Belongs to the globin family. Two-domain flavohemoproteins subfamily. This sequence in the C-terminal section; belongs to the flavoprotein pyridine nucleotide cytochrome reductase family. Heme b is required as a cofactor. FAD serves as cofactor.

It catalyses the reaction 2 nitric oxide + NADPH + 2 O2 = 2 nitrate + NADP(+) + H(+). The enzyme catalyses 2 nitric oxide + NADH + 2 O2 = 2 nitrate + NAD(+) + H(+). Functionally, is involved in NO detoxification in an aerobic process, termed nitric oxide dioxygenase (NOD) reaction that utilizes O(2) and NAD(P)H to convert NO to nitrate, which protects the bacterium from various noxious nitrogen compounds. Therefore, plays a central role in the inducible response to nitrosative stress. In Pseudomonas aeruginosa (strain ATCC 15692 / DSM 22644 / CIP 104116 / JCM 14847 / LMG 12228 / 1C / PRS 101 / PAO1), this protein is Flavohemoprotein.